A 623-amino-acid polypeptide reads, in one-letter code: NAD-dependent malic enzyme 1, mitochondrial (623 aa).

The N-terminal 38 residues, 1–38 (MGIANKLRLSSSSLSRILHRRILYSSAVRSFTTSEGHR), are a transit peptide targeting the mitochondrion. Residue tyrosine 143 is the Proton donor of the active site. Arginine 196 provides a ligand contact to NAD(+). Lysine 214 functions as the Proton acceptor in the catalytic mechanism. A divalent metal cation-binding residues include glutamate 285, aspartate 286, and aspartate 309. The NAD(+) site is built by aspartate 309 and asparagine 464.

The protein belongs to the malic enzymes family. Homodimer. Heterodimer of two related subunits in NAD-MEH complex. Interacts with NAD-ME2. The cofactor is Mg(2+). Mn(2+) serves as cofactor. In terms of tissue distribution, expressed in leaves, stems, flowers, and roots (at protein level).

Its subcellular location is the mitochondrion. It carries out the reaction (S)-malate + NAD(+) = pyruvate + CO2 + NADH. With respect to regulation, activated by oxaloacetate (OAA), 2-ketoglutarate, succinate and fumarate as homodimer and by OAA, 2-ketoglutarate, succinate, fumarate and coenzyme A (acetyl-CoA and CoA) as heterodimer NAD-MEH. In terms of biological role, involved in the regulation of sugars and amino acids metabolisms during the night period. The polypeptide is NAD-dependent malic enzyme 1, mitochondrial (NAD-ME1) (Arabidopsis thaliana (Mouse-ear cress)).